Here is a 52-residue protein sequence, read N- to C-terminus: Rubredoxin (52 aa).

At Met-1 the chain carries N-formylmethionine; partial. The Rubredoxin-like domain maps to 1–52 (MKKYGCLVCGYVYDPAKGDPDHGIAPGTAFEDLPADWVCPLCGVSKDEFEPL). Positions 6, 9, 39, and 42 each coordinate Fe cation.

It belongs to the rubredoxin family. Requires Fe(3+) as cofactor. Post-translationally, observed in four forms, with and without iron, and with and without formylation at Met-1.

Its function is as follows. Rubredoxin is a small nonheme, iron protein lacking acid-labile sulfide. Its single Fe, chelated to 4 Cys, functions as an electron acceptor and may also stabilize the conformation of the molecule. This is Rubredoxin from Heliobacterium mobile (Heliobacillus mobilis).